Consider the following 297-residue polypeptide: Palmitoyl-protein thioesterase ABHD10, mitochondrial (297 aa).

A mitochondrion-targeting transit peptide spans 1 to 43 (MAAWAPCRRWGWAAVSFGRHPGLSASLARKPPRAWWLSACRQK). In terms of domain architecture, AB hydrolase-1 spans 69-196 (IIFIPGYLSN…EIEMKGEWTL (128 aa)). Catalysis depends on charge relay system residues Ser-143, Asp-240, and His-270.

This sequence belongs to the AB hydrolase superfamily.

The protein resides in the mitochondrion. It carries out the reaction S-hexadecanoyl-L-cysteinyl-[protein] + H2O = L-cysteinyl-[protein] + hexadecanoate + H(+). The catalysed reaction is mycophenolic acid O-acyl-beta-D-glucuronide + H2O = mycophenolate + D-glucuronate + H(+). Its activity is regulated as follows. Inhibited by palmostatin-B. In terms of biological role, acts as an acyl-protein thioesterase that hydrolyzes fatty acids from acylated residues in proteins. Regulates the mitochondrial S-depalmitoylation of the nucleophilic active site residue of peroxiredoxin-5/PRDX5, a key antioxidant protein, therefore modulating mitochondrial antioxidant ability. Also catalyzes the deglucuronidation of mycophenolic acid acyl-glucuronide, an active metabolite of the immunosuppressant drug mycophenolate. The chain is Palmitoyl-protein thioesterase ABHD10, mitochondrial from Mus musculus (Mouse).